Here is a 78-residue protein sequence, read N- to C-terminus: UPF0335 protein RrIowa_0193 (78 aa).

It belongs to the UPF0335 family.

The protein is UPF0335 protein RrIowa_0193 of Rickettsia rickettsii (strain Iowa).